A 289-amino-acid polypeptide reads, in one-letter code: Enoyl-CoA delta isomerase 1, mitochondrial (289 aa).

Residues 1-28 (MALAAARRVLLQAGSRLGRRGAVDGARR) constitute a mitochondrion transit peptide. N6-acetyllysine; alternate is present on lysine 48. Residue lysine 48 is modified to N6-succinyllysine; alternate. Lysine 71 bears the N6-succinyllysine mark. The residue at position 76 (lysine 76) is an N6-acetyllysine. Residues 93–97 (AGLDL), glycine 140, and asparagine 164 each bind substrate. Lysine 222, lysine 229, and lysine 255 each carry N6-acetyllysine; alternate. Residues lysine 222, lysine 229, and lysine 255 each carry the N6-succinyllysine; alternate modification. Lysine 275 carries the N6-succinyllysine modification. An N6-acetyllysine; alternate modification is found at lysine 283. Lysine 283 is subject to N6-succinyllysine; alternate.

The protein belongs to the enoyl-CoA hydratase/isomerase family. In terms of assembly, homotrimer.

The protein localises to the mitochondrion matrix. It catalyses the reaction a (3Z)-enoyl-CoA = a 4-saturated (2E)-enoyl-CoA. The enzyme catalyses a (3E)-enoyl-CoA = a 4-saturated (2E)-enoyl-CoA. The catalysed reaction is (3Z)-octenoyl-CoA = (2E)-octenoyl-CoA. It carries out the reaction (2E)-tetradecenoyl-CoA = (3Z)-tetradecenoyl-CoA. It catalyses the reaction (3Z)-dodecenoyl-CoA = (2E)-dodecenoyl-CoA. The enzyme catalyses (3Z)-hexenoyl-CoA = (2E)-hexenoyl-CoA. The catalysed reaction is (3Z)-decenoyl-CoA = (2E)-decenoyl-CoA. It participates in lipid metabolism; fatty acid beta-oxidation. Functionally, key enzyme of fatty acid beta-oxidation. Able to isomerize both 3-cis (3Z) and 3-trans (3E) double bonds into the 2-trans (2E) form in a range of enoyl-CoA species, with a preference for (3Z)-enoyl-CoAs over (3E)-enoyl-CoAs. The catalytic efficiency of this enzyme is not affected by the fatty acyl chain length. This chain is Enoyl-CoA delta isomerase 1, mitochondrial, found in Rattus norvegicus (Rat).